We begin with the raw amino-acid sequence, 82 residues long: Putative defensin-like protein 191 (82 aa).

The first 28 residues, 1 to 28 (MAKSVNATGFITYMVIFLILTGISRVKA), serve as a signal peptide directing secretion. Intrachain disulfides connect Cys-33–Cys-79, Cys-46–Cys-65, Cys-51–Cys-74, and Cys-55–Cys-76.

Belongs to the DEFL family.

It localises to the secreted. The sequence is that of Putative defensin-like protein 191 from Arabidopsis thaliana (Mouse-ear cress).